A 139-amino-acid polypeptide reads, in one-letter code: Endocuticle structural glycoprotein SgAbd-8 (139 aa).

The residue at position 1 (Gln1) is a Pyrrolidone carboxylic acid. A glycan (O-linked (HexNAc...) threonine) is linked at Thr14. Ser15 is a glycosylation site (O-linked (HexNAc...) serine). Positions 29–99 (DGSYAWSYET…PEGAHLPTPP (71 aa)) constitute a Chitin-binding type R&amp;R domain. Thr97 is a glycosylation site (O-linked (HexNAc...) threonine). Residues 111-139 (FIASQPQQPGNNGGGQFPRPQPFPRPGAF) form a disordered region. The segment covering 129–139 (RPQPFPRPGAF) has biased composition (pro residues).

Component of the abdominal endocuticle. The sequence is that of Endocuticle structural glycoprotein SgAbd-8 from Schistocerca gregaria (Desert locust).